Here is a 456-residue protein sequence, read N- to C-terminus: MDSASRQHVALIAFPFASHPGNLFAFARALAAAAPDITFSFLTTTFAAATLPPAPPAANLRLCHVADGVPEGGLPPGTTIHGRIGMFLRATPGNFRDGVRAAEEEVGVKVSCVVSDAFLWMTADVAEEIGAQWLPLWTCAPAALLAHVSTDQLRERFGVEKQATAGWADELVDFIPGLSCLRIRDIPDEIVTNWHSDLSILLHRMGNQLTSATAVALNTFDGLDTTIDAALASLFKKTLPIGPLNLLSSPPPLQPGDEKCLSWLDGQEDATVAYVSFGTMVLMPTQSDVSEIAQGLESSGVRFLWSLREEARAGLLPPGFLERTAGRGLVVPWAPQVRVLGHRAVGAFVTHCGWNAVMESVTSGVPMACLPSFADQKTNARMVSAAWGIGEALRGEKVTKEEVVRSMEIVMMGEEGRRMRERIGNLREKAAEAVGPGGSSSENFKSVLEMVRGTAN.

The active-site Proton acceptor is the H19. H19 lines the an anthocyanidin pocket. The Charge relay role is filled by D116. H147 is a binding site for an anthocyanidin. The UDP-beta-L-rhamnose site is built by T279, A334, H351, N355, and E359. A374 serves as a coordination point for an anthocyanidin.

Belongs to the UDP-glycosyltransferase family. In terms of tissue distribution, expressed in young cromes.

The catalysed reaction is myricetin + UDP-beta-L-rhamnose = myricetin 3-O-alpha-L-rhamnoside + UDP + H(+). Its pathway is flavonoid metabolism. In terms of biological role, rhamnosyltransferase involved in montbretin A (MbA) biosynthesis. Catalyzes the 3-O rhamnosylation of myricetin to produce myricetin 3-O-alpha-L-rhamnoside (MR), a precursor of MbA. MbA is a potent inhibitor of human pancreatic alpha-amylase and is being developed as drug candidate to treat type-2 diabetes. In vitro, is able to transfer UDP-glucose and UDP-xylose with 50-fold less efficiency compared with UDP-rhamnose. In vitro, can use kaempferol or quercetin as substrates, although these two flavonols may not be physiological substrates in vivo. In Crocosmia x crocosmiiflora (Montbretia), this protein is Myricetin 3-O-rhamnosyltransferase UGT77B2.